Consider the following 100-residue polypeptide: Urease subunit gamma (100 aa).

It belongs to the urease gamma subunit family. Heterotrimer of UreA (gamma), UreB (beta) and UreC (alpha) subunits. Three heterotrimers associate to form the active enzyme.

It is found in the cytoplasm. The enzyme catalyses urea + 2 H2O + H(+) = hydrogencarbonate + 2 NH4(+). It functions in the pathway nitrogen metabolism; urea degradation; CO(2) and NH(3) from urea (urease route): step 1/1. This chain is Urease subunit gamma, found in Cereibacter sphaeroides (strain ATCC 17025 / ATH 2.4.3) (Rhodobacter sphaeroides).